The chain runs to 273 residues: MDWLLLAKAAIMGIVEGLTEFFPISSTGHLIVVGDLINFDDRIGNVFEVVIQLGAILAVCWEYRARLWQVAIDLPTSTMARKFVLNLLIAFLPAAIVGVLLIKTIKSYLFNPVAVACALVVGGLVILWAERRECTARVHRIDDMSHLDALKVGLAQIASLIPGTSRSGSTIIGGMLFGLDRRVATEFSFFLAIPIMFAATAYDVLKHWELFTAADLPTFGTGFLFAFLSAFVAVRGLIRFVASHTFNVFAWYRIVFGLIILGSWWLGWINWAS.

The next 6 membrane-spanning stretches (helical) occupy residues 43 to 63 (IGNVFEVVIQLGAILAVCWEY), 82 to 102 (KFVLNLLIAFLPAAIVGVLLI), 109 to 129 (LFNPVAVACALVVGGLVILWA), 185 to 205 (TEFSFFLAIPIMFAATAYDVL), 214 to 234 (ADLPTFGTGFLFAFLSAFVAV), and 249 to 269 (FAWYRIVFGLIILGSWWLGWI).

It belongs to the UppP family.

It is found in the cell inner membrane. It catalyses the reaction di-trans,octa-cis-undecaprenyl diphosphate + H2O = di-trans,octa-cis-undecaprenyl phosphate + phosphate + H(+). Catalyzes the dephosphorylation of undecaprenyl diphosphate (UPP). Confers resistance to bacitracin. The chain is Undecaprenyl-diphosphatase from Laribacter hongkongensis (strain HLHK9).